The primary structure comprises 541 residues: MAKSLLFGEQARRSMEAGVDKLADTVRVTLGPKGRNVVLDKKFGSPLITNDGVTIAREIELEDPYENMGAQLVKEVATKTNDVAGDGTTTATLLAQAIIREGLKNVTAGANPIQIRTGIRKAVEKAVEEIKVISKPVNGKEDIARVAAISAASEEVGKLIADAMERVGNDGVITVEESKSMGTDLEVVEGMQFDRGYVSAYMVTDTEKMEAVLDDVYILITDKKISNIQEILPILEQIVQQGKKLLIISEDIEGEALSTLVLNKLRGTFTCVGVKAPGFGDRRKEMLQDIAILTGGEVISEELGRDLKDVTIDMLGTADSVKVTKENTTIVNGKGDKVAIKERVSQIRVQIEDTTSEFDKEKLQERLAKLAGGVAVIRVGAATETELKEEKLRIEDALAATKAAVEEGIVPGGGTAYIDIIPKIADLTSDIIDVKLGIDIIRKALEEPVRQIANNAGAEGSVIIEKVKATEAGVGYDALNDKYVDMLKTGIVDPTKVTRSALQNAASIASTFLTTEAAVADIPEKENTPPMAPGMGMDGMY.

ATP is bound by residues 29-32 (TLGP), 86-90 (DGTTT), Gly-413, 477-479 (DAL), and Asp-493.

The protein belongs to the chaperonin (HSP60) family. Forms a cylinder of 14 subunits composed of two heptameric rings stacked back-to-back. Interacts with the co-chaperonin GroES.

The protein resides in the cytoplasm. It carries out the reaction ATP + H2O + a folded polypeptide = ADP + phosphate + an unfolded polypeptide.. In terms of biological role, together with its co-chaperonin GroES, plays an essential role in assisting protein folding. The GroEL-GroES system forms a nano-cage that allows encapsulation of the non-native substrate proteins and provides a physical environment optimized to promote and accelerate protein folding. The polypeptide is Chaperonin GroEL (Clostridium botulinum (strain ATCC 19397 / Type A)).